The sequence spans 233 residues: Protein AC81 (233 aa).

2 helical membrane passes run 171 to 191 (SFQT…VEKF) and 194 to 214 (INLL…NYII).

The protein localises to the host nucleus. Its subcellular location is the host membrane. The protein resides in the virion. Functionally, plays an essential role in the assembly of nucleocapsids with envelopes. The protein is Protein AC81 (AC81) of Autographa californica nuclear polyhedrosis virus (AcMNPV).